A 407-amino-acid chain; its full sequence is O-antigen polymerase (407 aa).

11 helical membrane-spanning segments follow: residues 2–22, 31–51, 63–83, 101–121, 141–161, 168–185, 190–204, 211–231, 319–339, 356–376, and 382–402; these read LIIS…TLSV, VMVP…GIFV, YLFF…SYLY, YVFT…PVLM, YGIY…CAFF, LFCI…FLHG, IFSI…LSYI, FMFL…FFAY, ADFG…KGVL, FIMF…GWLF, and IAFM…RFVL.

It localises to the cell inner membrane. It catalyses the reaction n lipid-linked O-antigen repeat units = a lipid-linked O antigen + (n-1) polyisoprenyl diphosphate.. Its pathway is bacterial outer membrane biogenesis; LPS O-antigen biosynthesis. Its function is as follows. Polymerase involved in the biosynthesis of the lipopolysaccharide (LPS). Catalyzes the polymerization of the O-antigen repeat units on the periplasmic face of the inner membrane, leading to the formation of the lipid-linked O-antigen molecule. The sequence is that of O-antigen polymerase (rfc) from Salmonella typhi.